The following is a 178-amino-acid chain: Methyltransferase flvH (178 aa).

The Post-SET domain occupies 120–136 (QPFNCFCGSQNCLGLIA). The Zn(2+) site is built by C124, C126, and C131.

This sequence belongs to the class V-like SAM-binding methyltransferase superfamily.

It catalyses the reaction L-lysine + 2 S-adenosyl-L-methionine = N(6),N(6)-dimethyl-L-lysine + 2 S-adenosyl-L-homocysteine + 2 H(+). It participates in secondary metabolite biosynthesis; terpenoid biosynthesis. Its function is as follows. Methyltransferase; part of the gene cluster that mediates the biosynthesis of flavunoidine, an alkaloidal terpenoid with a tetracyclic cage-like core connected to dimethylcadaverine via a C-N bond and acylated with 5,5-dimethyl-L-pipecolate. The tetracyclic core is synthesized by the terpene cyclase flvE and the cytochrome P450 monooxygenase flvD. The terpene cyclase flvE catalyzes the cyclization of farnesyl pyrophosphate (FPP) to form (1R,4R,5S)-(+)-acoradiene and the cytochrome P450 monooxygenase flvD is then responsible for oxidative conversion of (1R,4R,5S)-(+)-acoradiene into the tetracyclic cage present in the final product flavunoidine. In parallel, the N-methyltransferase flvH dimethylates L-lysine to give N,N-dimethyl-L-Lysin which is decarboxylated by flvG to afford dimethylcadaverine. The terpene cyclase-like protein flvF is the enzyme that attaches the dimethylcadaverine precusor at the C-7 of the tetracyclic cage to yield pre-flavunoidine. The cytochrome monooxygenase flvC hydroxylates the C-10 position of pre-flavunoidine whereas the NRPS flvI acylates the terpenoid core at the hydroxylated C-10 with dimethylpipecolate to yield final flavunoidine. The bifunctional enzyme flvA and the dehydrogenase flvB are responsible for the synthesis of the dimethylpipecolate precursor. The PLP-dependent lyase domain of flvA might use L-O-acetyl-homoserine and alpha-keto-isovalerate to form an intermediary ketone that can cyclize intramolecularly to yield an imine. The imine can be reduced by flvB to yield the 6-carboxylated pipecolate. The C-terminal alpha-KG-dependent oxygenase domain of flvA is then proposed to catalyze the decarboxylation to yield dimethylpipecolate. The chain is Methyltransferase flvH from Aspergillus flavus (strain ATCC 200026 / FGSC A1120 / IAM 13836 / NRRL 3357 / JCM 12722 / SRRC 167).